We begin with the raw amino-acid sequence, 406 residues long: LIM/homeobox protein Lhx1 (406 aa).

2 consecutive LIM zinc-binding domains span residues 4–54 and 63–117; these read CAGC…CKND and CAGC…CKED. Disordered regions lie at residues 128 to 189 and 294 to 372; these read NSLH…TIKA and DFFP…SAEV. The segment covering 137–148 has biased composition (low complexity); it reads SDPSLSPDSQDP. Basic and acidic residues predominate over residues 151–167; that stretch reads DDAKDSESANVSDKEGG. Phosphoserine is present on S162. Residues 180–239 constitute a DNA-binding region (homeobox); the sequence is RRGPRTTIKAKQLETLKAAFAATPKPTRHIREQLAQETGLNMRVIQVWFQNRRSKERRMK. The segment covering 315–327 has biased composition (low complexity); that stretch reads PSSGPSGTPLGGL. A compositionally biased stretch (pro residues) spans 352–362; sequence GDSPSPEPSLP.

In terms of assembly, interacts with LDB1 via the tandem LIM domains.

It localises to the nucleus. Functionally, potential transcription factor. May play a role in early mesoderm formation and later in lateral mesoderm differentiation and neurogenesis. The sequence is that of LIM/homeobox protein Lhx1 (Lhx1) from Mesocricetus auratus (Golden hamster).